Reading from the N-terminus, the 224-residue chain is Ribonuclease 3 (224 aa).

In terms of domain architecture, RNase III spans 4 to 126 (LDRLQRQISY…IIGAISLDSS (123 aa)). Mg(2+) is bound at residue glutamate 39. The active site involves aspartate 43. Aspartate 112 and glutamate 115 together coordinate Mg(2+). Glutamate 115 is a catalytic residue. One can recognise a DRBM domain in the interval 153–223 (DPKTRLQEYL…AEQILTALEI (71 aa)).

The protein belongs to the ribonuclease III family. Homodimer. The cofactor is Mg(2+).

Its subcellular location is the cytoplasm. It carries out the reaction Endonucleolytic cleavage to 5'-phosphomonoester.. Digests double-stranded RNA. Involved in the processing of primary rRNA transcript to yield the immediate precursors to the large and small rRNAs (23S and 16S). Processes some mRNAs, and tRNAs when they are encoded in the rRNA operon. Processes pre-crRNA and tracrRNA of type II CRISPR loci if present in the organism. This Mannheimia succiniciproducens (strain KCTC 0769BP / MBEL55E) protein is Ribonuclease 3.